A 177-amino-acid chain; its full sequence is Large ribosomal subunit protein uL6 (177 aa).

Belongs to the universal ribosomal protein uL6 family. Part of the 50S ribosomal subunit.

Its function is as follows. This protein binds to the 23S rRNA, and is important in its secondary structure. It is located near the subunit interface in the base of the L7/L12 stalk, and near the tRNA binding site of the peptidyltransferase center. This Dinoroseobacter shibae (strain DSM 16493 / NCIMB 14021 / DFL 12) protein is Large ribosomal subunit protein uL6.